The primary structure comprises 293 residues: ATP synthase gamma chain (293 aa).

Belongs to the ATPase gamma chain family. As to quaternary structure, F-type ATPases have 2 components, CF(1) - the catalytic core - and CF(0) - the membrane proton channel. CF(1) has five subunits: alpha(3), beta(3), gamma(1), delta(1), epsilon(1). CF(0) has three main subunits: a, b and c.

The protein localises to the cell membrane. Produces ATP from ADP in the presence of a proton gradient across the membrane. The gamma chain is believed to be important in regulating ATPase activity and the flow of protons through the CF(0) complex. In Streptococcus agalactiae serotype Ia (strain ATCC 27591 / A909 / CDC SS700), this protein is ATP synthase gamma chain.